Consider the following 120-residue polypeptide: uncharacterized protein (120 aa).

It to M.tuberculosis Rv0026 and Rv0739.

This is an uncharacterized protein from Mycobacterium tuberculosis (strain CDC 1551 / Oshkosh).